A 213-amino-acid polypeptide reads, in one-letter code: Transcription antitermination protein NusB (213 aa).

Belongs to the NusB family.

Functionally, involved in transcription antitermination. Required for transcription of ribosomal RNA (rRNA) genes. Binds specifically to the boxA antiterminator sequence of the ribosomal RNA (rrn) operons. In Picosynechococcus sp. (strain ATCC 27264 / PCC 7002 / PR-6) (Agmenellum quadruplicatum), this protein is Transcription antitermination protein NusB.